A 106-amino-acid chain; its full sequence is Large ribosomal subunit protein P2A (106 aa).

Lysine 2 is covalently cross-linked (Glycyl lysine isopeptide (Lys-Gly) (interchain with G-Cter in ubiquitin)). At threonine 16 the chain carries Phosphothreonine. A phosphoserine mark is found at serine 40 and serine 43. Lysine 48 participates in a covalent cross-link: Glycyl lysine isopeptide (Lys-Gly) (interchain with G-Cter in ubiquitin). The residue at position 49 (serine 49) is a Phosphoserine. A compositionally biased stretch (low complexity) spans proline 65–alanine 82. The interval proline 65–aspartate 106 is disordered. The segment covering alanine 83–methionine 100 has biased composition (acidic residues). Serine 96 carries the phosphoserine modification.

The protein belongs to the eukaryotic ribosomal protein P1/P2 family. As to quaternary structure, component of the large ribosomal subunit (LSU). Mature yeast ribosomes consist of a small (40S) and a large (60S) subunit. The 40S small subunit contains 1 molecule of ribosomal RNA (18S rRNA) and 33 different proteins (encoded by 57 genes). The large 60S subunit contains 3 rRNA molecules (25S, 5.8S and 5S rRNA) and 46 different proteins (encoded by 81 genes). The 5 acidic ribosomal P-proteins form the stalk structure of the 60S subunit. They are organized as a pentameric complex in which uL10/P0 interacts with 2 heterodimers, P1A-P2B and P1B-P2A. Phosphorylation is not involved in the interaction of the acidic P proteins with the ribosome, however it is suggested to affect the ribosome activity and to participate in a possible ribosome regulatory mechanism. Post-translationally, the N-terminus is not modified.

It is found in the cytoplasm. Its function is as follows. Component of the ribosome, a large ribonucleoprotein complex responsible for the synthesis of proteins in the cell. The small ribosomal subunit (SSU) binds messenger RNAs (mRNAs) and translates the encoded message by selecting cognate aminoacyl-transfer RNA (tRNA) molecules. The large subunit (LSU) contains the ribosomal catalytic site termed the peptidyl transferase center (PTC), which catalyzes the formation of peptide bonds, thereby polymerizing the amino acids delivered by tRNAs into a polypeptide chain. The nascent polypeptides leave the ribosome through a tunnel in the LSU and interact with protein factors that function in enzymatic processing, targeting, and the membrane insertion of nascent chains at the exit of the ribosomal tunnel. The protein is Large ribosomal subunit protein P2A of Saccharomyces cerevisiae (strain ATCC 204508 / S288c) (Baker's yeast).